The primary structure comprises 215 residues: Histidine biosynthesis bifunctional protein HisIE (215 aa).

Residues 1–126 (MSHSDLPLAN…GHKSPPPADM (126 aa)) are phosphoribosyl-AMP cyclohydrolase. The interval 127-215 (LTELARVIGD…VYRKLGDRRR (89 aa)) is phosphoribosyl-ATP pyrophosphohydrolase.

This sequence in the N-terminal section; belongs to the PRA-CH family. The protein in the C-terminal section; belongs to the PRA-PH family.

Its subcellular location is the cytoplasm. The enzyme catalyses 1-(5-phospho-beta-D-ribosyl)-ATP + H2O = 1-(5-phospho-beta-D-ribosyl)-5'-AMP + diphosphate + H(+). It carries out the reaction 1-(5-phospho-beta-D-ribosyl)-5'-AMP + H2O = 1-(5-phospho-beta-D-ribosyl)-5-[(5-phospho-beta-D-ribosylamino)methylideneamino]imidazole-4-carboxamide. Its pathway is amino-acid biosynthesis; L-histidine biosynthesis; L-histidine from 5-phospho-alpha-D-ribose 1-diphosphate: step 2/9. The protein operates within amino-acid biosynthesis; L-histidine biosynthesis; L-histidine from 5-phospho-alpha-D-ribose 1-diphosphate: step 3/9. This chain is Histidine biosynthesis bifunctional protein HisIE (hisI), found in Synechocystis sp. (strain ATCC 27184 / PCC 6803 / Kazusa).